Here is a 280-residue protein sequence, read N- to C-terminus: uncharacterized protein (280 aa).

Composition is skewed to basic and acidic residues over residues 110 to 122 (EKQAHDDHPERLQ), 167 to 177 (ATGEERAECGR), 223 to 261 (ARQHDQRGDRRKGEGDRQKHGDRRGRPDARKNADQRPQQ), and 269 to 280 (DVDRSKSCLEAE). Disordered regions lie at residues 110-137 (EKQAHDDHPERLQNRSVRQRNGDKKTEH), 151-177 (HRGERRSGNCQQQGRHATGEERAECGR), and 219-280 (TIID…LEAE).

This is an uncharacterized protein from Agrobacterium vitis (Rhizobium vitis).